A 214-amino-acid chain; its full sequence is Glucose-6-phosphate isomerase (214 aa).

Residues His92, His94, Glu101, and His140 each contribute to the Fe cation site.

Belongs to the archaeal-type GPI family. In terms of assembly, homodimer.

It localises to the cytoplasm. The catalysed reaction is alpha-D-glucose 6-phosphate = beta-D-fructose 6-phosphate. The protein operates within carbohydrate degradation; glycolysis; D-glyceraldehyde 3-phosphate and glycerone phosphate from D-glucose: step 2/4. In Sinorhizobium medicae (strain WSM419) (Ensifer medicae), this protein is Glucose-6-phosphate isomerase.